The sequence spans 147 residues: Ribonuclease 4 (147 aa).

The first 28 residues, Met-1–Gly-28, serve as a signal peptide directing secretion. Pyrrolidone carboxylic acid is present on Gln-29. Residues Arg-35, His-40, Lys-68, Asn-71, and Thr-72 each coordinate dUMP. The active-site Proton acceptor is His-40. Cystine bridges form between Cys-53/Cys-109, Cys-67/Cys-120, Cys-85/Cys-135, and Cys-92/Cys-99. Catalysis depends on His-144, which acts as the Proton donor. Residue Phe-145 coordinates dUMP.

Belongs to the pancreatic ribonuclease family.

Its subcellular location is the secreted. In terms of biological role, cleaves preferentially after uridine bases. Has antimicrobial activity against uropathogenic E.coli (UPEC). Probably contributes to urinary tract sterility. This Pongo abelii (Sumatran orangutan) protein is Ribonuclease 4 (RNASE4).